Reading from the N-terminus, the 386-residue chain is MGNTEIVAMILAGGQGSRLGVLTKKLAKPAVPFGGKYRIIDFPLSNCANSGIYTVGVLTQYKPLELNAHIGIGLPWDLDRKDGGVSILPPYQEEKGGNWYKGTANAIYQNIEFVDRYDPEYVLILSGDHIYKMNYTKMLEFHKEKNADATIGVIEVPVNEASRFGIMNTRDDMSIYEFEEKPKIPKSNLASMGIYIFNWKTLKKYLRNDEANKSSSNDFGKDIIPSMLNDGGKMVAYPFEGYWKDVGTIESLWQANMDLLKSDNKLNLHDQDWRIYSTNPVRPAQYIGENAKVTNSLIVEGCTVNGTVQNSVLFQGVQVGKNTIIKDSVIMTNAKIGDNVIIEKAIIGNDAVIRKDCVIGTGDEIEIVAAKEEVKMGSIMKNSKAV.

Residues Tyr-100, Gly-165, 180–181 (EK), and Ser-191 each bind alpha-D-glucose 1-phosphate.

Belongs to the bacterial/plant glucose-1-phosphate adenylyltransferase family. In terms of assembly, homotetramer.

It carries out the reaction alpha-D-glucose 1-phosphate + ATP + H(+) = ADP-alpha-D-glucose + diphosphate. It participates in glycan biosynthesis; glycogen biosynthesis. In terms of biological role, involved in the biosynthesis of ADP-glucose, a building block required for the elongation reactions to produce glycogen. Catalyzes the reaction between ATP and alpha-D-glucose 1-phosphate (G1P) to produce pyrophosphate and ADP-Glc. The polypeptide is Glucose-1-phosphate adenylyltransferase (Clostridium botulinum (strain Alaska E43 / Type E3)).